The primary structure comprises 336 residues: Apyrase (336 aa).

The first 21 residues, 1 to 21 (MFLKFCVVAFAICLSINLSEG), serve as a signal peptide directing secretion. A glycan (N-linked (GlcNAc...) asparagine) is linked at Asn209.

It belongs to the apyrase family. Requires Ca(2+) as cofactor. In terms of tissue distribution, salivary gland (at protein level).

It localises to the secreted. It carries out the reaction a ribonucleoside 5'-triphosphate + 2 H2O = a ribonucleoside 5'-phosphate + 2 phosphate + 2 H(+). Its function is as follows. Facilitates hematophagy by inhibiting ADP- and collagen-dependent platelet aggregation in the host. Cleaves adenosine triphosphate (ATP) and adenosine diphosphate (ADP) to adenosine monophosphate (AMP) and inorganic phosphate in calcium-dependent manner. The protein is Apyrase of Phlebotomus duboscqi (Sandfly).